The primary structure comprises 359 residues: MPLRALVAVIVTTAVMLVPRAWAQTAWERYKARFMMPDARIIDTANGNVSHTEGQGFAMLLAVANNDRPAFDKLWQWTDSTLRDKSNGLFYWRYNPVAPDPIADKNNATDGDTLIAWALLRAQKQWQDKRYATASDAITASLLKYTVVTFAGRQVMLPGVKGFNRNDHLNLNPSYFIFPAWRAFAERTHLTAWRTLQSDGQALLGQMGWGKSHLPSDWVALRADGKMLPAKEWPPRMSFDAIRIPLYISWVDPHSALLAPWKAWMQSYPRLQTPAWINVSTNEVAPWNMAGGLLAVRDLTLGEPLERRRLTTRMIITPPASSCWSGWRNRISASAVMALQVSQPVCLRAERKEQERLTM.

Positions 1-23 (MPLRALVAVIVTTAVMLVPRAWA) are cleaved as a signal peptide. Glutamate 53 functions as the Proton donor in the catalytic mechanism. The active-site Nucleophile is aspartate 110.

Belongs to the glycosyl hydrolase 8 (cellulase D) family.

The enzyme catalyses Endohydrolysis of (1-&gt;4)-beta-D-glucosidic linkages in cellulose, lichenin and cereal beta-D-glucans.. The biological conversion of cellulose to glucose generally requires three types of hydrolytic enzymes: (1) Endoglucanases which cut internal beta-1,4-glucosidic bonds; (2) Exocellobiohydrolases that cut the disaccharide cellobiose from the non-reducing end of the cellulose polymer chain; (3) Beta-1,4-glucosidases which hydrolyze the cellobiose and other short cello-oligosaccharides to glucose. This Cellulomonas uda protein is Endoglucanase.